The sequence spans 235 residues: Small ribosomal subunit protein mS23 (235 aa).

Residues 51–71 (PYPIQHTEPKDRGRAAQRPRN) form a disordered region.

It belongs to the mitochondrion-specific ribosomal protein mS23 family. Component of the mitochondrial small ribosomal subunit.

The protein localises to the mitochondrion. This is Small ribosomal subunit protein mS23 (RSM25) from Chaetomium globosum (strain ATCC 6205 / CBS 148.51 / DSM 1962 / NBRC 6347 / NRRL 1970) (Soil fungus).